Consider the following 605-residue polypeptide: 9-cis-epoxycarotenoid dioxygenase NCED1, chloroplastic (605 aa).

The N-terminal 16 residues, 1 to 16, are a transit peptide targeting the chloroplast; the sequence is MATTTSHATNTWIKTK. The tract at residues 55–89 is disordered; the sequence is ILHFPKQSSNYQTPKNNTISHPKQENNNSSSSSTS. The span at 60–75 shows a compositional bias: polar residues; sequence KQSSNYQTPKNNTISH. Residues 80 to 89 show a composition bias toward low complexity; that stretch reads NNNSSSSSTS. The Fe cation site is built by His-302, His-351, His-416, and His-592.

This sequence belongs to the carotenoid oxygenase family. Fe(2+) serves as cofactor. In terms of tissue distribution, expressed in developing and ripening fruits. Highly expressed in pulp. Observed in unpollinated ovaries (e.g. ovules, placenta and pericarp). Expressed in flowers.

It localises to the plastid. It is found in the chloroplast stroma. The enzyme catalyses a 9-cis-epoxycarotenoid + O2 = a 12'-apo-carotenal + 2-cis,4-trans-xanthoxin. It catalyses the reaction 9-cis-violaxanthin + O2 = (3S,5R,6S)-5,6-epoxy-3-hydroxy-5,6-dihydro-12'-apo-beta-caroten-12'-al + 2-cis,4-trans-xanthoxin. It carries out the reaction 9'-cis-neoxanthin + O2 = (3S,5R,6R)-3,5-dihydroxy-6,7-didehydro-5,6-dihydro-12'-apo-beta-caroten-12'-al + 2-cis,4-trans-xanthoxin. Its pathway is plant hormone biosynthesis; abscisate biosynthesis. In terms of biological role, has a 11,12(11',12') 9-cis epoxycarotenoid cleavage activity. Catalyzes the first step of abscisic-acid (ABA) biosynthesis from carotenoids. Required for ABA accumulation upon drought. Required for ABA-mediated regulation of anther/pollen development, including metabolism, cell wall modification and transcription level. Positive regulator of fruit ripening involved in the biosynthesis of abscisic acid (ABA); initiates ABA biosynthesis at the onset of fruit ripening. Modulates the degree of pigmentation and carotenoid composition as well as pectin catabolism during ripening and may regulate the ethylene production and action in climacteric tomato fruit. The chain is 9-cis-epoxycarotenoid dioxygenase NCED1, chloroplastic from Solanum lycopersicum (Tomato).